Consider the following 450-residue polypeptide: tRNA modification GTPase MnmE (450 aa).

Residues R25, E86, and R126 each coordinate (6S)-5-formyl-5,6,7,8-tetrahydrofolate. The TrmE-type G domain occupies 221 to 373 (GLRVALVGRP…LVQALLERCG (153 aa)). N231 is a K(+) binding site. GTP contacts are provided by residues 231–236 (NVGKSS), 250–256 (TELPGTT), 275–278 (DTAG), and 336–339 (NKAD). S235 contributes to the Mg(2+) binding site. Residues T250, L252, and T255 each contribute to the K(+) site. Mg(2+) is bound at residue T256. K450 serves as a coordination point for (6S)-5-formyl-5,6,7,8-tetrahydrofolate.

The protein belongs to the TRAFAC class TrmE-Era-EngA-EngB-Septin-like GTPase superfamily. TrmE GTPase family. Homodimer. Heterotetramer of two MnmE and two MnmG subunits. K(+) is required as a cofactor.

The protein localises to the cytoplasm. Functionally, exhibits a very high intrinsic GTPase hydrolysis rate. Involved in the addition of a carboxymethylaminomethyl (cmnm) group at the wobble position (U34) of certain tRNAs, forming tRNA-cmnm(5)s(2)U34. This chain is tRNA modification GTPase MnmE, found in Parasynechococcus marenigrum (strain WH8102).